The chain runs to 473 residues: Probable cytosolic iron-sulfur protein assembly protein 1 (473 aa).

Residues 1–25 are disordered; sequence MPSSTPGGSLKHLSDLTPPSQDRTW. WD repeat units lie at residues 11–58 and 62–104; these read KHLS…LLST and GHKR…GRAE. A disordered region spans residues 112-133; the sequence is GGLAEADRQEGDDTDGDEEDED. Over residues 123–133 the composition is skewed to acidic residues; sequence DDTDGDEEDED. WD repeat units lie at residues 144–183, 191–230, 235–313, and 341–380; these read GHDS…DNNF, EHSG…WGQV, GHEG…KPPP, and MHDL…KPPV. The segment at 377–405 is disordered; the sequence is KPPVHTTSEQDKPDSARETQKANGERTAP. The segment covering 384–400 has biased composition (basic and acidic residues); the sequence is SEQDKPDSARETQKANG. A WD 7 repeat occupies 438–473; sequence SQQQNFDNSEMDHANEEEVLLSTGDDGVVRVWTLER.

It belongs to the WD repeat CIA1 family.

Essential component of the cytosolic iron-sulfur (Fe/S) protein assembly machinery. Required for the maturation of extramitochondrial Fe/S proteins. In Coccidioides immitis (strain RS) (Valley fever fungus), this protein is Probable cytosolic iron-sulfur protein assembly protein 1.